A 147-amino-acid chain; its full sequence is Leghemoglobin 6 (147 aa).

The Globin domain occupies 2-147 (SFTDKQEALV…LATEIKKAMS (146 aa)). Nitrated tyrosine is present on residues Y25 and Y30. Position 45 (S45) interacts with heme b. S45 is subject to Phosphoserine. An O2-binding site is contributed by H62. The heme b site is built by K65, H94, and K97. Residue Y135 is modified to Nitrated tyrosine.

It belongs to the plant globin family. As to quaternary structure, monomer. Post-translationally, nitrated in effective nodules and particularly in hypoxic conditions; this mechanism may play a protective role in the symbiosis by buffering toxic peroxynitrite NO(2)(-). Nitration level decrease during nodule senescence. In terms of processing, phosphorylation at Ser-45 disrupts the molecular environment of its porphyrin ring oxygen binding pocket, thus leading to a reduced oxygen consumption and to the delivery of oxygen O(2) to symbiosomes. In terms of tissue distribution, root nodules.

It is found in the cytoplasm. It localises to the cytosol. Its subcellular location is the nucleus. In terms of biological role, leghemoglobin that reversibly binds oxygen O(2) through a pentacoordinated heme iron. In root nodules, facilitates the diffusion of oxygen to the bacteroids while preventing the bacterial nitrogenase from being inactivated by buffering dioxygen, nitric oxide and carbon monoxide, and promoting the formation of reactive oxygen species (ROS, e.g. H(2)O(2)). This role is essential for symbiotic nitrogen fixation (SNF). This Medicago truncatula (Barrel medic) protein is Leghemoglobin 6.